The primary structure comprises 944 residues: ATP-dependent helicase fft1 (944 aa).

Disordered regions lie at residues 89-109 (AAYDPHDQPPERDVSLKESSN) and 174-246 (SAQK…NSIP). A compositionally biased stretch (basic and acidic residues) spans 92-108 (DPHDQPPERDVSLKESS). Positions 174–184 (SAQKLNNQPIE) are enriched in polar residues. The segment covering 186-203 (SSVDKENAKRKRYVEEGT) has biased composition (basic and acidic residues). The span at 217–227 (LSDEETNEDDL) shows a compositional bias: acidic residues. Residues 230–246 (QSPTACTTDANIDNSIP) are compositionally biased toward polar residues. Residues 426–592 (CLMYKAKLSG…ISLLAFMLPK (167 aa)) form the Helicase ATP-binding domain. ATP is bound at residue 439–446 (DEMGLGKT). The DEGH box motif lies at 543–546 (DEGH). The region spanning 766-923 (KVKKLCSLLK…DSEKIQKEIS (158 aa)) is the Helicase C-terminal domain.

It belongs to the SNF2/RAD54 helicase family.

It localises to the nucleus. It catalyses the reaction ATP + H2O = ADP + phosphate + H(+). Functionally, DNA helicase that possesses intrinsic ATP-dependent nucleosome-remodeling activity and is required for heterochromatin organization. The sequence is that of ATP-dependent helicase fft1 (fft1) from Schizosaccharomyces pombe (strain 972 / ATCC 24843) (Fission yeast).